The chain runs to 157 residues: ATP synthase subunit b' (157 aa).

The chain crosses the membrane as a helical span at residues 22–42 (ATLPLIAIQFLLLVAVLNSLF).

This sequence belongs to the ATPase B chain family. In terms of assembly, F-type ATPases have 2 components, F(1) - the catalytic core - and F(0) - the membrane proton channel. F(1) has five subunits: alpha(3), beta(3), gamma(1), delta(1), epsilon(1). F(0) has four main subunits: a(1), b(1), b'(1) and c(10-14). The alpha and beta chains form an alternating ring which encloses part of the gamma chain. F(1) is attached to F(0) by a central stalk formed by the gamma and epsilon chains, while a peripheral stalk is formed by the delta, b and b' chains.

Its subcellular location is the cellular thylakoid membrane. Its function is as follows. F(1)F(0) ATP synthase produces ATP from ADP in the presence of a proton or sodium gradient. F-type ATPases consist of two structural domains, F(1) containing the extramembraneous catalytic core and F(0) containing the membrane proton channel, linked together by a central stalk and a peripheral stalk. During catalysis, ATP synthesis in the catalytic domain of F(1) is coupled via a rotary mechanism of the central stalk subunits to proton translocation. Functionally, component of the F(0) channel, it forms part of the peripheral stalk, linking F(1) to F(0). The b'-subunit is a diverged and duplicated form of b found in plants and photosynthetic bacteria. The polypeptide is ATP synthase subunit b' (Synechococcus sp. (strain JA-2-3B'a(2-13)) (Cyanobacteria bacterium Yellowstone B-Prime)).